We begin with the raw amino-acid sequence, 437 residues long: UDP-N-acetylmuramoylalanine--D-glutamate ligase (437 aa).

112–118 (GSNGKST) contacts ATP.

This sequence belongs to the MurCDEF family.

The protein localises to the cytoplasm. It catalyses the reaction UDP-N-acetyl-alpha-D-muramoyl-L-alanine + D-glutamate + ATP = UDP-N-acetyl-alpha-D-muramoyl-L-alanyl-D-glutamate + ADP + phosphate + H(+). Its pathway is cell wall biogenesis; peptidoglycan biosynthesis. Its function is as follows. Cell wall formation. Catalyzes the addition of glutamate to the nucleotide precursor UDP-N-acetylmuramoyl-L-alanine (UMA). This Haemophilus influenzae (strain PittEE) protein is UDP-N-acetylmuramoylalanine--D-glutamate ligase.